Here is a 140-residue protein sequence, read N- to C-terminus: Large ribosomal subunit protein uL11 (140 aa).

The protein belongs to the universal ribosomal protein uL11 family. In terms of assembly, part of the ribosomal stalk of the 50S ribosomal subunit. Interacts with L10 and the large rRNA to form the base of the stalk. L10 forms an elongated spine to which L12 dimers bind in a sequential fashion forming a multimeric L10(L12)X complex. One or more lysine residues are methylated.

In terms of biological role, forms part of the ribosomal stalk which helps the ribosome interact with GTP-bound translation factors. The protein is Large ribosomal subunit protein uL11 of Enterococcus faecalis (strain ATCC 700802 / V583).